A 946-amino-acid chain; its full sequence is MSSFSITRKKTPFQKHREEEEARKKKAEDETARLYQEFVESFQGDNATTKTFVRGGTINPGDKPKVDSEGEKSKDGGSVSKKGSRYVPSFLPPPLASKGKEPEKKREEERPREREKGKTRNIDNFMEELKREQEMRERRNQDRDRQGDSSPSSRFDELPDDFDPSGRPGSFDDGDPQTTNLYVGNLSPKVDENFLLRTFGRFGPIASVKIMWPRTDEEKRRQRNCGFVSFMNRADGQAAKDEMQGIIVYEYELKIGWGKAVSLPSQALPAPPPGHMAIRSKEGCNLVFSGQTGPPIITSVPNQNSELVLTPNVPDITVVTPEDEHLRHVIDTLALYVLDGECAFEQAIMERGRGNPLFKFMFELGSKEHTYYVWRLYSFAQGDTLQRWRTEPYIMITGSGRWIPPPLPVTRTQEHEKESASTYAAGRTRRAEVERTLTDPQRDEFEDMLRALTLERSQIKEAMGFALDNADAAGEVVEVLTESLTLKETSIPTKVARLMLVSDILHNSSARVKNASAYRTKFEATLPDIMESFNDLYRSITGRITAEALKERVLKVLQVWADWFLFSDAYIYGLRSTFLRSGVSGVTSFHSICGDAPEIENKSYADNMSDIGKINPDAALAIGKGAARQELMNLPIAELERRCRHNGLSLVGGRVMMVTRLLSLEDTEKQRGYEAVDEIPKHPQNHSTWEEVKSEREHIKNSYAEVEMKEPVNLPTTIPIPQPELKAFVGKEKNELILPASKWARDDDEADDEQKRSSSSGSDNTGGITFKADGEDLKGNDCVRAQPDNGMDEEQRQKRRRIEVALIEYRETLEEQGMKNPEEIERKVEINRKRLEVDYGLSGPNEGNRNQKSIIERKEKREDSQESSKKRHRGENKSQSPPRKSSTRERDHDLGRDRDRERHRDRDRQHDLNRDRDRREKSSSHDRDDNDRSKERDRDWRRRGTR.

2 disordered regions span residues 1 to 29 (MSSFSITRKKTPFQKHREEEEARKKKAED) and 41 to 183 (SFQG…NLYV). Composition is skewed to basic and acidic residues over residues 15–29 (KHREEEEARKKKAED), 62–75 (DKPKVDSEGEKSKD), and 98–147 (KGKE…DRQG). An RRM domain is found at 179 to 260 (TNLYVGNLSP…YELKIGWGKA (82 aa)). Residues 329–372 (VIDTLALYVLDGECAFEQAIMERGRGNPLFKFMFELGSKEHTYY) form an SURP motif repeat. A CID domain is found at 437–582 (LTDPQRDEFE…GLRSTFLRSG (146 aa)). An SAP domain is found at 631-665 (LMNLPIAELERRCRHNGLSLVGGRVMMVTRLLSLE). 2 disordered regions span residues 740–797 (ASKW…EQRQ) and 836–946 (EVDY…RGTR). Over residues 757 to 767 (SSSSGSDNTGG) the composition is skewed to polar residues. 3 stretches are compositionally biased toward basic and acidic residues: residues 772–781 (ADGEDLKGND), 854–868 (IIERKEKREDSQESS), and 886–946 (STRE…RGTR).

As to quaternary structure, component of the SWAP1-SFPS-RRC1 splicing factor complex which modulates pre-mRNA splicing to promote photomorphogenesis. Interacts with SWAP1 in a light-independent manner. As to expression, expressed in leaves, inflorescence stems, roots, flower buds, open flowers and siliques.

Its subcellular location is the nucleus speckle. In terms of biological role, as a member of the SWAP1-SFPS-RRC1 splicing factor complex, modulates photomorphogenesis by regulating the gene expression and pre-messenger RNA (mRNA) alternative splicing of a large number of genes, including those involved in plant responses to light signaling. SR-like splicing factor required for phytochrome B (phyB) signal transduction and involved in phyB-dependent alternative splicing. The protein is Protein RRC1 of Arabidopsis thaliana (Mouse-ear cress).